The following is a 117-amino-acid chain: Pterin-4-alpha-carbinolamine dehydratase 2 (117 aa).

3 positions are modified to N6-acetyllysine; alternate: Lys-101, Lys-105, and Lys-112. Lys-101, Lys-105, and Lys-112 each carry N6-succinyllysine; alternate.

Belongs to the pterin-4-alpha-carbinolamine dehydratase family. As to quaternary structure, homotetramer. Interacts with DYRK1B.

It carries out the reaction (4aS,6R)-4a-hydroxy-L-erythro-5,6,7,8-tetrahydrobiopterin = (6R)-L-erythro-6,7-dihydrobiopterin + H2O. Involved in tetrahydrobiopterin biosynthesis. Seems to both prevent the formation of 7-pterins and accelerate the formation of quinonoid-BH2. Functionally, regulates the dimerization of homeodomain protein HNF-1-alpha and enhances its transcriptional activity. This is Pterin-4-alpha-carbinolamine dehydratase 2 (PCBD2) from Pongo abelii (Sumatran orangutan).